An 89-amino-acid chain; its full sequence is Cell division topological specificity factor (89 aa).

This sequence belongs to the MinE family.

In terms of biological role, prevents the cell division inhibition by proteins MinC and MinD at internal division sites while permitting inhibition at polar sites. This ensures cell division at the proper site by restricting the formation of a division septum at the midpoint of the long axis of the cell. The sequence is that of Cell division topological specificity factor from Edwardsiella ictaluri (strain 93-146).